The sequence spans 295 residues: Glutamate-binding protein GluB (295 aa).

The N-terminal stretch at 1–26 (MSAKRTFTRIGAILGATALAGVTLTA) is a signal peptide. The N-palmitoyl cysteine moiety is linked to residue cysteine 27. Cysteine 27 is lipidated: S-diacylglycerol cysteine.

It belongs to the bacterial solute-binding protein 3 family. In terms of assembly, the complex is composed of two ATP-binding proteins (GluA), two transmembrane proteins (GluC and GluD) and a solute-binding protein (GluB).

It is found in the cell membrane. With respect to regulation, binding of glutamate or asparatate induces a higher thermal stability of the protein structure. Part of the ABC transporter complex GluABCD involved in glutamate uptake. Binds glutamate with a high affinity. Also binds aspartate with high affinity, suggesting that GluB could be involved in the transport of both amino acid residues into the cell. This is Glutamate-binding protein GluB from Corynebacterium glutamicum (strain ATCC 13032 / DSM 20300 / JCM 1318 / BCRC 11384 / CCUG 27702 / LMG 3730 / NBRC 12168 / NCIMB 10025 / NRRL B-2784 / 534).